A 315-amino-acid polypeptide reads, in one-letter code: MIPTIAILSGGFSCEREISLMSGKAVKKALDSLSYNAIEIDVDSNIAEKLKKINPGLAFIALHGPYGEDGCIQGLLEILGIKYTHSGVMASAVAINKVMSKHIFRSLNIDTPKGYVISREDVLKNNIKIDYPYVLKPINEGSSIGVYIIFSHEDYLELKNNSSTIMEKMIVEEYIPGIELHTAVLLDEAIGTIEVRPKNKFYDYEAKYTDGFAEHIFPAKIPDNIYKMTLEHALKIHQFLGCKTISRSDFRYNPKNNTLKMLEINTHPGFTELSLVPEIAKLAKGINFNELVKIIIEDSLQHKNIRDLSHVEQYY.

Residues 101–297 (KHIFRSLNID…FNELVKIIIE (197 aa)) enclose the ATP-grasp domain. ATP is bound at residue 128 to 181 (KIDYPYVLKPINEGSSIGVYIIFSHEDYLELKNNSSTIMEKMIVEEYIPGIELH). Asp-249, Glu-263, and Asn-265 together coordinate Mg(2+).

This sequence belongs to the D-alanine--D-alanine ligase family. Requires Mg(2+) as cofactor. Mn(2+) is required as a cofactor.

The protein localises to the cytoplasm. It carries out the reaction 2 D-alanine + ATP = D-alanyl-D-alanine + ADP + phosphate + H(+). Its pathway is cell wall biogenesis; peptidoglycan biosynthesis. Its function is as follows. Cell wall formation. The chain is D-alanine--D-alanine ligase from Wolbachia pipientis wMel.